The following is a 248-amino-acid chain: 3-oxoacyl-[acyl-carrier-protein] reductase FabG (248 aa).

NADP(+) is bound by residues G14–R17, D65–V66, and N92. S144 serves as a coordination point for substrate. Y157 functions as the Proton acceptor in the catalytic mechanism. Residues Y157–K161 and I190 each bind NADP(+).

It belongs to the short-chain dehydrogenases/reductases (SDR) family. In terms of assembly, homotetramer.

The enzyme catalyses a (3R)-hydroxyacyl-[ACP] + NADP(+) = a 3-oxoacyl-[ACP] + NADPH + H(+). It functions in the pathway lipid metabolism; fatty acid biosynthesis. Its function is as follows. Catalyzes the NADPH-dependent reduction of beta-ketoacyl-ACP substrates to beta-hydroxyacyl-ACP products, the first reductive step in the elongation cycle of fatty acid biosynthesis. The chain is 3-oxoacyl-[acyl-carrier-protein] reductase FabG (fabG) from Chlamydia trachomatis serovar D (strain ATCC VR-885 / DSM 19411 / UW-3/Cx).